Here is a 220-residue protein sequence, read N- to C-terminus: UPF0319 protein YccT (220 aa).

A signal peptide spans 1–20 (MKTGIVTTLIALCLPVSVFA).

The protein belongs to the UPF0319 family.

The polypeptide is UPF0319 protein YccT (Escherichia coli O139:H28 (strain E24377A / ETEC)).